We begin with the raw amino-acid sequence, 515 residues long: Protein disulfide-isomerase (515 aa).

The signal sequence occupies residues 1–20 (MRTFAPWILSLLGASAVASA). Thioredoxin domains follow at residues 21 to 136 (ADAT…QSLP) and 343 to 470 (VLDD…ENGK). Residues C58, C61, C393, and C396 each act as nucleophile in the active site. Cystine bridges form between C58–C61 and C393–C396. Composition is skewed to basic and acidic residues over residues 472 to 496 (KVDALEVDPKKEQESGDATETRAAS) and 506 to 515 (SDDKSEHDEL). Residues 472 to 515 (KVDALEVDPKKEQESGDATETRAASDETETPAATSDDKSEHDEL) form a disordered region. A Prevents secretion from ER motif is present at residues 512–515 (HDEL).

Belongs to the protein disulfide isomerase family.

The protein resides in the endoplasmic reticulum lumen. It carries out the reaction Catalyzes the rearrangement of -S-S- bonds in proteins.. In terms of biological role, participates in the folding of proteins containing disulfide bonds, may be involved in glycosylation, prolyl hydroxylation and triglyceride transfer. In Aspergillus oryzae (strain ATCC 42149 / RIB 40) (Yellow koji mold), this protein is Protein disulfide-isomerase (pdiA).